The following is a 451-amino-acid chain: C4-dicarboxylate transport protein (451 aa).

The next 9 membrane-spanning stretches (helical) occupy residues 17-37 (SLYV…HFYP), 53-73 (LIKM…IAGM), 85-105 (LALL…LIVV), 153-173 (AFAK…GFAL), 193-213 (VLFT…FGAM), 231-251 (LMGS…GLIA), 306-326 (GYSF…VFIA), 339-359 (ITLL…TGSG), and 361-381 (IVLA…LALI).

Belongs to the dicarboxylate/amino acid:cation symporter (DAACS) (TC 2.A.23) family.

It localises to the cell inner membrane. Its function is as follows. Responsible for the transport of dicarboxylates such as succinate, fumarate, and malate from the periplasm across the membrane. This is C4-dicarboxylate transport protein from Paracidovorax citrulli (strain AAC00-1) (Acidovorax citrulli).